Here is a 112-residue protein sequence, read N- to C-terminus: Phosphoribosyl-AMP cyclohydrolase (112 aa).

Mg(2+) is bound at residue Asp76. Cys77 serves as a coordination point for Zn(2+). 2 residues coordinate Mg(2+): Asp78 and Asp80. Zn(2+) contacts are provided by Cys93 and Cys100.

It belongs to the PRA-CH family. Homodimer. It depends on Mg(2+) as a cofactor. Zn(2+) serves as cofactor.

The protein localises to the cytoplasm. The enzyme catalyses 1-(5-phospho-beta-D-ribosyl)-5'-AMP + H2O = 1-(5-phospho-beta-D-ribosyl)-5-[(5-phospho-beta-D-ribosylamino)methylideneamino]imidazole-4-carboxamide. It functions in the pathway amino-acid biosynthesis; L-histidine biosynthesis; L-histidine from 5-phospho-alpha-D-ribose 1-diphosphate: step 3/9. Functionally, catalyzes the hydrolysis of the adenine ring of phosphoribosyl-AMP. This chain is Phosphoribosyl-AMP cyclohydrolase, found in Streptococcus thermophilus (strain ATCC BAA-491 / LMD-9).